We begin with the raw amino-acid sequence, 55 residues long: Large ribosomal subunit protein bL33B (55 aa).

This sequence belongs to the bacterial ribosomal protein bL33 family.

The chain is Large ribosomal subunit protein bL33B from Mycobacteroides abscessus (strain ATCC 19977 / DSM 44196 / CCUG 20993 / CIP 104536 / JCM 13569 / NCTC 13031 / TMC 1543 / L948) (Mycobacterium abscessus).